Reading from the N-terminus, the 92-residue chain is Small ribosomal subunit protein bS18 (92 aa).

The protein belongs to the bacterial ribosomal protein bS18 family. In terms of assembly, part of the 30S ribosomal subunit. Forms a tight heterodimer with protein bS6.

Functionally, binds as a heterodimer with protein bS6 to the central domain of the 16S rRNA, where it helps stabilize the platform of the 30S subunit. This Pelagibacter ubique (strain HTCC1062) protein is Small ribosomal subunit protein bS18.